The primary structure comprises 464 residues: tRNA modification GTPase MnmE (464 aa).

Positions 25, 87, and 130 each coordinate (6S)-5-formyl-5,6,7,8-tetrahydrofolate. A TrmE-type G domain is found at 226–386 (GLSVVLAGQP…LRAELLRIAG (161 aa)). Position 236 (Asn236) interacts with K(+). Residues 236 to 241 (NVGKSS), 255 to 261 (TPIAGTT), and 280 to 283 (DTAG) contribute to the GTP site. Mg(2+) is bound at residue Ser240. Thr255, Ile257, and Thr260 together coordinate K(+). Residue Thr261 coordinates Mg(2+). A (6S)-5-formyl-5,6,7,8-tetrahydrofolate-binding site is contributed by Lys464.

Belongs to the TRAFAC class TrmE-Era-EngA-EngB-Septin-like GTPase superfamily. TrmE GTPase family. Homodimer. Heterotetramer of two MnmE and two MnmG subunits. K(+) is required as a cofactor.

Its subcellular location is the cytoplasm. Functionally, exhibits a very high intrinsic GTPase hydrolysis rate. Involved in the addition of a carboxymethylaminomethyl (cmnm) group at the wobble position (U34) of certain tRNAs, forming tRNA-cmnm(5)s(2)U34. The polypeptide is tRNA modification GTPase MnmE (Burkholderia orbicola (strain AU 1054)).